The primary structure comprises 112 residues: MDDKVEEPIDFIMKHCLWQSHSRNWDRERQNEEILKKTKQLLCGEPVDLSTPSDRCYWVDAVSLVDAYRERYTWINAMSKDELAQLIDTLKARLDYLTISGSLNEELSDKNY.

Hexamer of two alpha, two beta, and two delta chains. Iron-sulfur cluster is required as a cofactor.

It carries out the reaction N2 + 8 reduced [2Fe-2S]-[ferredoxin] + 16 ATP + 16 H2O = H2 + 8 oxidized [2Fe-2S]-[ferredoxin] + 2 NH4(+) + 16 ADP + 16 phosphate + 6 H(+). The key enzymatic reactions in nitrogen fixation are catalyzed by the nitrogenase complex, which has 2 components: the iron protein (component 2) and a component 1 which is either a molybdenum-iron protein, a vanadium-iron, or an iron-iron protein. The chain is Nitrogenase iron-iron protein delta chain (anfG) from Azomonas macrocytogenes (Azotobacter macrocytogenes).